Here is a 214-residue protein sequence, read N- to C-terminus: Adenylate kinase (214 aa).

Glycine 10–threonine 15 is a binding site for ATP. An NMP region spans residues serine 30–valine 59. AMP contacts are provided by residues threonine 31, arginine 36, glutamate 57–valine 59, glycine 85–arginine 88, and glutamine 92. The segment at glycine 126–aspartate 163 is LID. Arginine 127 contributes to the ATP binding site. 2 residues coordinate Zn(2+): cysteine 130 and cysteine 133. Position 136–137 (threonine 136–tyrosine 137) interacts with ATP. Residues cysteine 150 and cysteine 153 each coordinate Zn(2+). Residues arginine 160 and arginine 171 each coordinate AMP. Glycine 199 contacts ATP.

The protein belongs to the adenylate kinase family. Monomer.

The protein localises to the cytoplasm. It catalyses the reaction AMP + ATP = 2 ADP. It participates in purine metabolism; AMP biosynthesis via salvage pathway; AMP from ADP: step 1/1. Its function is as follows. Catalyzes the reversible transfer of the terminal phosphate group between ATP and AMP. Plays an important role in cellular energy homeostasis and in adenine nucleotide metabolism. In Ruminiclostridium cellulolyticum (strain ATCC 35319 / DSM 5812 / JCM 6584 / H10) (Clostridium cellulolyticum), this protein is Adenylate kinase.